The chain runs to 341 residues: Peroxisomal membrane protein import receptor PEX19 (341 aa).

Residues M1–E18 show a composition bias toward acidic residues. 5 disordered regions span residues M1–Q26, D39–E66, V109–I141, L293–E312, and L318–Q341. A compositionally biased stretch (basic and acidic residues) spans D39–D53. At S61 the chain carries Phosphoserine. A compositionally biased stretch (polar residues) spans Q113–I141. S303 is modified (phosphoserine). A compositionally biased stretch (basic and acidic residues) spans L330 to Q341. C338 carries the cysteine methyl ester modification. C338 is lipidated: S-farnesyl cysteine. Residues K339–Q341 constitute a propeptide, removed in mature form.

The protein belongs to the peroxin-19 family. In terms of assembly, interacts (farnesylated) with PEX3; farnesylation is required for this interaction. Interacts with PEX2, PEX5, PEX10, PEX11, PEX12, PEX13, PEX14, PEX17, PEX22, PEX25, PEX30 and PEX32; the interaction requires well-defined PEX19-binding sites within the peroxisomal membrane protein targeting signal (mPTS) of the PMPs and is independent on the presence of PEX3. Interacts with VPS1.

The protein localises to the cytoplasm. Its subcellular location is the peroxisome membrane. It is found in the endoplasmic reticulum membrane. Its function is as follows. Required for proper post-translational import and stabilization of peroxisomal membrane proteins (PMPs). Acts as a cytosolic import receptor for PMPs and delivers them to the docking factor PEX3 at the peroxisomal membrane for subsequent insertion into the membrane. Acts as a chaperone in stabilizing or maintaining PMPs in the lipid bilayer. Directs PEX17, a peripheral component of the peroxisomal matrix protein translocation machinery, to peroxisomes. Stabilizes VPS1, a protein required for peroxisomal fission, at the peroxisomal membrane. Also acts in conjunction with PEX3 in the formation of peroxisomes from preperoxisomal compartments at the endoplasmic reticulum during de novo peroxisome synthesis, probably via the import of additional PMPs. The chain is Peroxisomal membrane protein import receptor PEX19 (PEX19) from Saccharomyces cerevisiae (strain YJM789) (Baker's yeast).